Reading from the N-terminus, the 365-residue chain is Peptide chain release factor 2 (365 aa).

Glutamine 252 carries the N5-methylglutamine modification.

Belongs to the prokaryotic/mitochondrial release factor family. In terms of processing, methylated by PrmC. Methylation increases the termination efficiency of RF2.

The protein localises to the cytoplasm. Its function is as follows. Peptide chain release factor 2 directs the termination of translation in response to the peptide chain termination codons UGA and UAA. The polypeptide is Peptide chain release factor 2 (Klebsiella pneumoniae (strain 342)).